The following is a 135-amino-acid chain: VapC ribonuclease aq_1901 (135 aa).

The 128-residue stretch at 3–130 (LLDTTVLLDF…FKKLGFKTVN (128 aa)) folds into the PINc domain. Mg(2+) is bound at residue D5.

Belongs to the PINc/VapC protein family. The cofactor is Mg(2+).

Functionally, toxic component of a type II toxin-antitoxin (TA) system. An RNase. This is VapC ribonuclease aq_1901 from Aquifex aeolicus (strain VF5).